A 160-amino-acid chain; its full sequence is Endoribonuclease YbeY (160 aa).

The Zn(2+) site is built by His123, His127, and His133.

This sequence belongs to the endoribonuclease YbeY family. The cofactor is Zn(2+).

Its subcellular location is the cytoplasm. Its function is as follows. Single strand-specific metallo-endoribonuclease involved in late-stage 70S ribosome quality control and in maturation of the 3' terminus of the 16S rRNA. This is Endoribonuclease YbeY from Roseiflexus sp. (strain RS-1).